The sequence spans 414 residues: Serine hydroxymethyltransferase (414 aa).

Residues L121 and 125-127 (GHL) each bind (6S)-5,6,7,8-tetrahydrofolate. At K229 the chain carries N6-(pyridoxal phosphate)lysine.

This sequence belongs to the SHMT family. In terms of assembly, homodimer. It depends on pyridoxal 5'-phosphate as a cofactor.

Its subcellular location is the cytoplasm. It carries out the reaction (6R)-5,10-methylene-5,6,7,8-tetrahydrofolate + glycine + H2O = (6S)-5,6,7,8-tetrahydrofolate + L-serine. Its pathway is one-carbon metabolism; tetrahydrofolate interconversion. The protein operates within amino-acid biosynthesis; glycine biosynthesis; glycine from L-serine: step 1/1. Functionally, catalyzes the reversible interconversion of serine and glycine with tetrahydrofolate (THF) serving as the one-carbon carrier. This reaction serves as the major source of one-carbon groups required for the biosynthesis of purines, thymidylate, methionine, and other important biomolecules. Also exhibits THF-independent aldolase activity toward beta-hydroxyamino acids, producing glycine and aldehydes, via a retro-aldol mechanism. This is Serine hydroxymethyltransferase from Albidiferax ferrireducens (strain ATCC BAA-621 / DSM 15236 / T118) (Rhodoferax ferrireducens).